The sequence spans 114 residues: Late cornified envelope protein 1D (114 aa).

The segment covering 1–10 (MSCQQSQQQC) has biased composition (low complexity). Disordered regions lie at residues 1–21 (MSCQ…PKCT) and 75–114 (HHRR…GGCC). Basic residues predominate over residues 75–86 (HHRRHRSHRRRP). The segment covering 88-99 (SSDCCSQPSGGS) has biased composition (low complexity).

It belongs to the LCE family. Interacts with CYSRT1. As to expression, skin-specific. Expression was readily detected in adult trunk skin, adult arm skin, fetal skin, penal skin, vulva, esophagus and tongue. Not expressed in the cervix, rectum, lung, colon, or placenta.

In terms of biological role, precursors of the cornified envelope of the stratum corneum. This is Late cornified envelope protein 1D (LCE1D) from Homo sapiens (Human).